The following is a 171-amino-acid chain: Replication restart protein PriC (171 aa).

Belongs to the PriC family. As to quaternary structure, monomer. Component of the replication restart primosome, which is composed of PriA, PriB, PriC, DnaBe and DnaT; DnaG primase associates transiently with this complex. Interacts with the C-terminus of SSB. SSB interaction is required to load the main replicative helicase onto substrate replication forks. Interacts with helicase DnaB alone and in the DnaB-DnaC complex, probably 1:1 binding with DnaB.

Involved in the restart of stalled replication forks, which reloads the DnaB replicative helicase on sites other than the origin of replication. In vitro can load (E.coli) DnaB replicative helicase from a DnaB-DnaC complex on a single-stranded DNA (ssDNA)-binding protein (SSB)-coated stalled replication fork with no leading- or lagging-strand in the absence of other primosome proteins (PriA, PriB or DnaT). Binds SSB (tested with E.coli protein) and ssDNA. Complements priC in an E.coli priB-priC double deletion. In Cronobacter sakazakii (strain ATCC BAA-894) (Enterobacter sakazakii), this protein is Replication restart protein PriC.